Consider the following 373-residue polypeptide: Anhydro-N-acetylmuramic acid kinase (373 aa).

Position 13 to 20 (13 to 20) interacts with ATP; the sequence is GTSMDGID.

It belongs to the anhydro-N-acetylmuramic acid kinase family.

The catalysed reaction is 1,6-anhydro-N-acetyl-beta-muramate + ATP + H2O = N-acetyl-D-muramate 6-phosphate + ADP + H(+). It functions in the pathway amino-sugar metabolism; 1,6-anhydro-N-acetylmuramate degradation. Its pathway is cell wall biogenesis; peptidoglycan recycling. Its function is as follows. Catalyzes the specific phosphorylation of 1,6-anhydro-N-acetylmuramic acid (anhMurNAc) with the simultaneous cleavage of the 1,6-anhydro ring, generating MurNAc-6-P. Is required for the utilization of anhMurNAc either imported from the medium or derived from its own cell wall murein, and thus plays a role in cell wall recycling. This chain is Anhydro-N-acetylmuramic acid kinase, found in Brucella abortus (strain 2308).